A 758-amino-acid chain; its full sequence is 5-methyltetrahydropteroyltriglutamate--homocysteine methyltransferase (758 aa).

Residues 16 to 19 and K112 each bind 5-methyltetrahydropteroyltri-L-glutamate; that span reads RELK. L-homocysteine-binding positions include 433 to 435 and E486; that span reads IGS. L-methionine contacts are provided by residues 433–435 and E486; that span reads IGS. Residues 517–518 and W563 each bind 5-methyltetrahydropteroyltri-L-glutamate; that span reads RC. D601 is an L-homocysteine binding site. D601 lines the L-methionine pocket. E607 contacts 5-methyltetrahydropteroyltri-L-glutamate. Zn(2+)-binding residues include H643, C645, and E667. The active-site Proton donor is the H696. C728 lines the Zn(2+) pocket.

Belongs to the vitamin-B12 independent methionine synthase family. The cofactor is Zn(2+).

It catalyses the reaction 5-methyltetrahydropteroyltri-L-glutamate + L-homocysteine = tetrahydropteroyltri-L-glutamate + L-methionine. The protein operates within amino-acid biosynthesis; L-methionine biosynthesis via de novo pathway; L-methionine from L-homocysteine (MetE route): step 1/1. Functionally, catalyzes the transfer of a methyl group from 5-methyltetrahydrofolate to homocysteine resulting in methionine formation. The sequence is that of 5-methyltetrahydropteroyltriglutamate--homocysteine methyltransferase from Neisseria meningitidis serogroup B (strain ATCC BAA-335 / MC58).